Here is a 103-residue protein sequence, read N- to C-terminus: MSGRGKGGKGLGKGGAKRHRKVLRDNIQGITKPAIRRLARRGGVKRISGLIYEETRGVLKVFLENVIRDAVTYTEHAKRKTVTAMDVVYALKRQGRTLYGFGG.

Residues 1 to 14 show a composition bias toward gly residues; sequence MSGRGKGGKGLGKG. Positions 1–20 are disordered; it reads MSGRGKGGKGLGKGGAKRHR. Position 2 is an N-acetylserine (S2). Phosphoserine is present on S2. R4 carries the asymmetric dimethylarginine; by PRMT1; alternate modification. The residue at position 4 (R4) is a Citrulline; alternate. R4 bears the Omega-N-methylarginine; by PRMT1; alternate mark. R4 is modified (symmetric dimethylarginine; by PRMT5 and PRMT7; alternate). K6, K9, K13, and K17 each carry N6-(2-hydroxyisobutyryl)lysine; alternate. N6-acetyl-N6-methyllysine; alternate is present on K6. 4 positions are modified to N6-acetyllysine: K6, K9, K13, and K17. 4 positions are modified to N6-butyryllysine; alternate: K6, K9, K13, and K17. Position 6 is an N6-glutaryllysine; alternate (K6). 4 positions are modified to N6-lactoyllysine; alternate: K6, K9, K13, and K17. Residue K9 is modified to N6-propionyllysine; alternate. K13 carries the post-translational modification N6-acetyl-N6-methyllysine; alternate. An N6-glutaryllysine; alternate modification is found at K13. K13 bears the N6-methyllysine; alternate mark. The residue at position 17 (K17) is an N6-propionyllysine; alternate. The DNA-binding element occupies 17-21; that stretch reads KRHRK. K21 is subject to N6-methyllysine; alternate. Residue K21 is modified to N6,N6,N6-trimethyllysine; alternate. An N6,N6-dimethyllysine; alternate modification is found at K21. K21 carries the post-translational modification N6-methylated lysine. K32 and K45 each carry N6-(2-hydroxyisobutyryl)lysine; alternate. K32 carries the N6-acetyllysine modification. An N6-butyryllysine; alternate mark is found at K32 and K45. Residue K32 is modified to N6-glutaryllysine; alternate. The residue at position 32 (K32) is an N6-lactoyllysine; alternate. Residues K32 and K45 each carry the N6-propionyllysine; alternate modification. K32 bears the N6-succinyllysine; alternate mark. A Glycyl lysine isopeptide (Lys-Gly) (interchain with G-Cter in UFM1); alternate cross-link involves residue K32. Residue S48 is modified to Phosphoserine; by PAK2. At Y52 the chain carries Phosphotyrosine. K60 is subject to N6-acetyllysine. An N6-glutaryllysine; alternate mark is found at K60, K78, and K80. At K60 the chain carries N6-(2-hydroxyisobutyryl)lysine. Residues K78 and K80 each carry the N6-(2-hydroxyisobutyryl)lysine; alternate modification. N6-butyryllysine; alternate occurs at positions 78 and 80. K78 is modified (N6-lactoyllysine; alternate). K78 and K80 each carry N6-propionyllysine; alternate. K78 is subject to N6-succinyllysine. The residue at position 80 (K80) is an N6-acetyllysine. Y89 carries the phosphotyrosine modification. N6-(2-hydroxyisobutyryl)lysine; alternate is present on K92. At K92 the chain carries N6-butyryllysine; alternate. K92 is modified (N6-glutaryllysine; alternate). Residue K92 is modified to N6-lactoyllysine; alternate. Position 92 is an N6-propionyllysine; alternate (K92). K92 is modified (N6-succinyllysine; alternate). K92 carries the post-translational modification N6-acetyllysine; alternate. A Glycyl lysine isopeptide (Lys-Gly) (interchain with G-Cter in ubiquitin); alternate cross-link involves residue K92.

Belongs to the histone H4 family. In terms of assembly, the nucleosome is a histone octamer containing two molecules each of H2A, H2B, H3 and H4 assembled in one H3-H4 heterotetramer and two H2A-H2B heterodimers. The octamer wraps approximately 147 bp of DNA. In terms of processing, acetylation at Lys-6 (H4K5ac), Lys-9 (H4K8ac), Lys-13 (H4K12ac) and Lys-17 (H4K16ac) occurs in coding regions of the genome but not in heterochromatin. Post-translationally, citrullination at Arg-4 (H4R3ci) by PADI4 impairs methylation. Monomethylation and asymmetric dimethylation at Arg-4 (H4R3me1 and H4R3me2a, respectively) by PRMT1 favors acetylation at Lys-9 (H4K8ac) and Lys-13 (H4K12ac). Demethylation is performed by JMJD6. Symmetric dimethylation on Arg-4 (H4R3me2s) by the PRDM1/PRMT5 complex may play a crucial role in the germ-cell lineage. In terms of processing, monomethylated, dimethylated or trimethylated at Lys-21 (H4K20me1, H4K20me2, H4K20me3). Monomethylation is performed by KMT5A/SET8. Trimethylation is performed by KMT5B and KMT5C and induces gene silencing. Monomethylated at Lys-13 (H4K12me1) by N6AMT1; H4K12me1 modification is present at the promoters of numerous genes encoding cell cycle regulators. Post-translationally, acetyl-methylated at Lys-6 and Lys-13 (H4K5acme and H4K12acme, respectively), acetyl-methylation is an epigenetic mark of active chromatin associated with increased transcriptional initiation. Acetyl-methylation is formed by acetylation by EP300/p300 of lysine residues that are already monomethylated on the same side chain. H4K5acme and H4K12acme marks specifically bind BRD2. Phosphorylated by pak2 at Ser-48 (H4S47ph). This phosphorylation increases the association of H3.3-H4 with the histone chaperone HIRA, thus promoting nucleosome assembly of H3.3-H4 and inhibiting nucleosome assembly of H3.1-H4. In terms of processing, ubiquitinated by the CUL4-DDB-RBX1 complex in response to ultraviolet irradiation. This may weaken the interaction between histones and DNA and facilitate DNA accessibility to repair proteins. Monoubiquitinated at Lys-92 of histone H4 (H4K91ub1) in response to DNA damage. The exact role of H4K91ub1 in DNA damage response is still unclear but it may function as a licensing signal for additional histone H4 post-translational modifications such as H4 Lys-21 methylation (H4K20me). Post-translationally, sumoylated, which is associated with transcriptional repression. Butyrylation of histones marks active promoters and competes with histone acetylation. In terms of processing, glutarylation at Lys-92 (H4K91glu) destabilizes nucleosomes by promoting dissociation of the H2A-H2B dimers from nucleosomes. Post-translationally, ufmylated; monofmylated by UFL1 at Lys-32 (H4K31Ufm1) in response to DNA damage. Lactylated in macrophages by EP300/P300 by using lactoyl-CoA directly derived from endogenous or exogenous lactate, leading to stimulates gene transcription. Delactylated by SIRT3 at Lys-17 (H4K16la).

The protein localises to the nucleus. It localises to the chromosome. Functionally, core component of nucleosome. Nucleosomes wrap and compact DNA into chromatin, limiting DNA accessibility to the cellular machineries which require DNA as a template. Histones thereby play a central role in transcription regulation, DNA repair, DNA replication and chromosomal stability. DNA accessibility is regulated via a complex set of post-translational modifications of histones, also called histone code, and nucleosome remodeling. This is Histone H4 from Xenopus laevis (African clawed frog).